Reading from the N-terminus, the 209-residue chain is ATP-dependent Clp protease proteolytic subunit 1 (209 aa).

S109 functions as the Nucleophile in the catalytic mechanism. H134 is a catalytic residue.

This sequence belongs to the peptidase S14 family. In terms of assembly, fourteen ClpP subunits assemble into 2 heptameric rings which stack back to back to give a disk-like structure with a central cavity, resembling the structure of eukaryotic proteasomes.

It is found in the cytoplasm. The catalysed reaction is Hydrolysis of proteins to small peptides in the presence of ATP and magnesium. alpha-casein is the usual test substrate. In the absence of ATP, only oligopeptides shorter than five residues are hydrolyzed (such as succinyl-Leu-Tyr-|-NHMec, and Leu-Tyr-Leu-|-Tyr-Trp, in which cleavage of the -Tyr-|-Leu- and -Tyr-|-Trp bonds also occurs).. Its function is as follows. Cleaves peptides in various proteins in a process that requires ATP hydrolysis. Has a chymotrypsin-like activity. Plays a major role in the degradation of misfolded proteins. This is ATP-dependent Clp protease proteolytic subunit 1 from Corynebacterium diphtheriae (strain ATCC 700971 / NCTC 13129 / Biotype gravis).